The sequence spans 466 residues: Gamma-aminobutyric acid receptor subunit gamma-2 (466 aa).

An N-terminal signal peptide occupies residues 1–38 (MSSPNTWSTGSTVYSPVFSQKMTLWILLLLSLYPGFTS). Over 39–274 (QKSDDDYEDY…FDLSRRMGYF (236 aa)) the chain is Extracellular. N-linked (GlcNAc...) asparagine glycans are attached at residues Asn-51 and Asn-128. Cys-189 and Cys-203 are disulfide-bonded. N-linked (GlcNAc...) asparagine glycosylation occurs at Asn-246. Residues 275-295 (TIQTYIPCTLIVVLSWVSFWI) traverse the membrane as a helical segment. Residues 296 to 301 (NKDAVP) lie on the Cytoplasmic side of the membrane. A helical membrane pass occupies residues 302 to 321 (ARTSLGITTVLTMTTLSTIA). The Extracellular segment spans residues 322-333 (RKSLPKVSYVTA). Residues 334–358 (MDLFVSVCFIFVFSALVEYGTLHYF) form a helical membrane-spanning segment. Residues 359–442 (VSNRKPSKDK…IHIRIAKMDS (84 aa)) lie on the Cytoplasmic side of the membrane. The chain crosses the membrane as a helical span at residues 443–463 (YARIFFPTAFCLFNLVYWVSY). Topologically, residues 464–466 (LYL) are extracellular.

The protein belongs to the ligand-gated ion channel (TC 1.A.9) family. Gamma-aminobutyric acid receptor (TC 1.A.9.5) subfamily. GABRG2 sub-subfamily. In terms of assembly, heteropentamer, formed by a combination of alpha (GABRA1-6), beta (GABRB1-3), gamma (GABRG1-3), delta (GABRD), epsilon (GABRE), rho (GABRR1-3), pi (GABRP) and theta (GABRQ) chains, each subunit exhibiting distinct physiological and pharmacological properties. Interacts with GABARAP. Interacts with KIF21B. Identified in a complex of 720 kDa composed of LHFPL4, NLGN2, GABRA1, GABRB2, GABRG2 and GABRB3. Interacts with LHFPL4. Interacts with SHISA7; interaction leads to the regulation of GABA(A) receptor trafficking, channel deactivation kinetics and pharmacology. Palmitoylated by ZDHHC3/GODZ; required for the accumulation of GABA(A) receptors at the postsynaptic membrane of inhibitory GABAergic synapses. In terms of processing, glycosylated. As to expression, expressed in brain (at protein level). Expressed in lungs, in alveolar epithelium.

Its subcellular location is the postsynaptic cell membrane. It localises to the cell membrane. It is found in the cell projection. The protein resides in the dendrite. The protein localises to the cytoplasmic vesicle membrane. The catalysed reaction is chloride(in) = chloride(out). Its activity is regulated as follows. Allosterically activated by benzodiazepines. Activated by pentobarbital. Inhibited by the antagonist bicuculline. Inhibited by zinc ions. Potentiated by histamine. Functionally, gamma subunit of the heteropentameric ligand-gated chloride channel gated by gamma-aminobutyric acid (GABA), a major inhibitory neurotransmitter in the brain. GABA-gated chloride channels, also named GABA(A) receptors (GABAAR), consist of five subunits arranged around a central pore and contain GABA active binding site(s) located at the alpha and beta subunit interface(s). When activated by GABA, GABAARs selectively allow the flow of chloride anions across the cell membrane down their electrochemical gradient. Gamma-2/GABRG2-containing GABAARs are found at both synaptic and extrasynaptic sites. Chloride influx into the postsynaptic neuron following GABAAR opening decreases the neuron ability to generate a new action potential, thereby reducing nerve transmission. GABAARs containing alpha-1 and beta-2 or -3 subunits exhibit synaptogenic activity; the gamma-2 subunit being necessary but not sufficient to induce rapid synaptic contacts formation. Extrasynaptic gamma-2-containing receptors contribute to the tonic GABAergic inhibition. GABAARs function also as histamine receptor where histamine binds at the interface of two neighboring beta subunits and potentiates GABA response in a gamma-2 subunit-controlled manner. The protein is Gamma-aminobutyric acid receptor subunit gamma-2 of Rattus norvegicus (Rat).